We begin with the raw amino-acid sequence, 72 residues long: Phaiodotoxin-3 (72 aa).

The LCN-type CS-alpha/beta domain maps to 1–72; sequence KFIRHKDESF…CFGALESKCA (72 aa). 4 disulfides stabilise this stretch: Cys13–Cys38, Cys23–Cys50, Cys27–Cys52, and Cys63–Cys71.

The protein belongs to the long (4 C-C) scorpion toxin superfamily. Sodium channel inhibitor family. As to expression, expressed by the venom gland.

It localises to the secreted. Functionally, sodium channel (Nav) specific neurotoxin. The chain is Phaiodotoxin-3 from Anuroctonus phaiodactylus (Mafia scorpion).